A 102-amino-acid polypeptide reads, in one-letter code: uncharacterized protein (102 aa).

2 helical membrane-spanning segments follow: residues 33-55 and 57-79; these read VLELLTIISGLVVTLVLVVLVVL and VVGVVVLVVLLVVVVLLCDVVVA.

The protein localises to the membrane. This is an uncharacterized protein from Saccharomyces cerevisiae (strain ATCC 204508 / S288c) (Baker's yeast).